The primary structure comprises 301 residues: MNSYESRGHLLTEQVNPQSQNLDQMSALELVDLFNQEDQKTLEAIANAREALAQAIEITSEALMHGGRLFYVGAGTSGRLGVLDAAECPPTFCTPPELVQGIIAGGAGALVRSSEDLEDRAEDGKKAIAQRQITELDVVVGITAGGTTPYVQGALIAAQQRGAKTIFISCVPAEQVPFAAAVDIRLLTGPEILAGSTRLKAGTVTKMALNILSTSVMVKLGKVYGNRMIDVAVTNHKLHDRALRILQDLTDLSREEAAILLEKSQRRVKIALLMHWKNVDASEAEHLLKVHQGSLRTALKS.

Residues T59–K222 form the SIS domain. The active-site Proton donor is the E87. E118 is a catalytic residue.

The protein belongs to the GCKR-like family. MurNAc-6-P etherase subfamily. As to quaternary structure, homodimer.

The catalysed reaction is N-acetyl-D-muramate 6-phosphate + H2O = N-acetyl-D-glucosamine 6-phosphate + (R)-lactate. The protein operates within amino-sugar metabolism; N-acetylmuramate degradation. Its function is as follows. Specifically catalyzes the cleavage of the D-lactyl ether substituent of MurNAc 6-phosphate, producing GlcNAc 6-phosphate and D-lactate. This Picosynechococcus sp. (strain ATCC 27264 / PCC 7002 / PR-6) (Agmenellum quadruplicatum) protein is N-acetylmuramic acid 6-phosphate etherase.